The primary structure comprises 85 residues: Progonadoliberin-2 (85 aa).

An N-terminal signal peptide occupies residues 1–23 (MCASRLVLLLGLLLCVGAHLSSG). Gln24 carries the post-translational modification Pyrrolidone carboxylic acid. Gly33 is modified (glycine amide).

Belongs to the GnRH family. As to expression, midbrain tegmentum.

Its subcellular location is the secreted. In terms of biological role, stimulates the secretion of gonadotropins. The protein is Progonadoliberin-2 (gnrh2) of Verasper moseri (Barfin flounder).